The sequence spans 191 residues: dCTP deaminase (191 aa).

DCTP-binding positions include 112–117 (KSTYAR), 136–138 (TLE), Gln157, Tyr173, and Gln183. The active-site Proton donor/acceptor is Glu138.

The protein belongs to the dCTP deaminase family. Homotrimer.

It carries out the reaction dCTP + H2O + H(+) = dUTP + NH4(+). It participates in pyrimidine metabolism; dUMP biosynthesis; dUMP from dCTP (dUTP route): step 1/2. Its function is as follows. Catalyzes the deamination of dCTP to dUTP. The sequence is that of dCTP deaminase from Xylella fastidiosa (strain 9a5c).